We begin with the raw amino-acid sequence, 91 residues long: Acylphosphatase (91 aa).

In terms of domain architecture, Acylphosphatase-like spans 5 to 91 (RAHLRIYGRV…EGLEGFKVVG (87 aa)). Residues R20 and N38 contribute to the active site.

This sequence belongs to the acylphosphatase family.

It carries out the reaction an acyl phosphate + H2O = a carboxylate + phosphate + H(+). In Thermococcus kodakarensis (strain ATCC BAA-918 / JCM 12380 / KOD1) (Pyrococcus kodakaraensis (strain KOD1)), this protein is Acylphosphatase (acyP).